The sequence spans 302 residues: Dermonecrotic toxin LiSicTox-alphaIA1bii (302 aa).

An N-terminal signal peptide occupies residues 1 to 14; the sequence is ARVVLGCWSVLSQA. Residues 15-22 constitute a propeptide that is removed on maturation; it reads AQTDDEER. H34 is a catalytic residue. Mg(2+)-binding residues include E54 and D56. H70 (nucleophile) is an active-site residue. Cystine bridges form between C74/C80 and C76/C219. D114 is a Mg(2+) binding site.

This sequence belongs to the arthropod phospholipase D family. Class II subfamily. Class IIa sub-subfamily. The cofactor is Mg(2+). Expressed by the venom gland.

The protein localises to the secreted. The catalysed reaction is an N-(acyl)-sphingosylphosphocholine = an N-(acyl)-sphingosyl-1,3-cyclic phosphate + choline. It catalyses the reaction an N-(acyl)-sphingosylphosphoethanolamine = an N-(acyl)-sphingosyl-1,3-cyclic phosphate + ethanolamine. The enzyme catalyses a 1-acyl-sn-glycero-3-phosphocholine = a 1-acyl-sn-glycero-2,3-cyclic phosphate + choline. It carries out the reaction a 1-acyl-sn-glycero-3-phosphoethanolamine = a 1-acyl-sn-glycero-2,3-cyclic phosphate + ethanolamine. Dermonecrotic toxins cleave the phosphodiester linkage between the phosphate and headgroup of certain phospholipids (sphingolipid and lysolipid substrates), forming an alcohol (often choline) and a cyclic phosphate. This toxin acts on sphingomyelin (SM). It may also act on ceramide phosphoethanolamine (CPE), lysophosphatidylcholine (LPC) and lysophosphatidylethanolamine (LPE), but not on lysophosphatidylserine (LPS), and lysophosphatidylglycerol (LPG). It acts by transphosphatidylation, releasing exclusively cyclic phosphate products as second products. Induces hemolysis, dermonecrosis, vascular permeability and platelet aggregation. The sequence is that of Dermonecrotic toxin LiSicTox-alphaIA1bii from Loxosceles intermedia (Brown spider).